The primary structure comprises 92 residues: Neurophysin 2 (92 aa).

Cystine bridges form between Cys7/Cys51, Cys10/Cys24, Cys18/Cys41, Cys25/Cys31, Cys58/Cys70, Cys64/Cys82, and Cys71/Cys76.

The protein belongs to the vasopressin/oxytocin family.

It is found in the secreted. Its function is as follows. Neurophysin 2 specifically binds the midbrain peptide hormone vasopressin. The sequence is that of Neurophysin 2 (AVP) from Equus caballus (Horse).